Reading from the N-terminus, the 665-residue chain is Sodium/glucose cotransporter 1 (665 aa).

At 1-24 (MDSSTLSPAVTATDAPIPSYERIR) the chain is on the extracellular side. Residues 25-47 (NAADISVIVIYFVVVMAVGLWAM) form a helical membrane-spanning segment. The Cytoplasmic segment spans residues 48-66 (FSTNRGTVGGFFLAGRSMV). Residues 67–90 (WWPIGASLFASNIGSGHFVGLAGT) form a helical membrane-spanning segment. Topologically, residues 91–95 (GAAAG) are extracellular. Residues 96–117 (IAMGGFEWNALVLVVVLGWIFV) form a helical membrane-spanning segment. Residues 118–139 (PIYIKAGVVTMPEYLRKRFGGK) are Cytoplasmic-facing. A helical membrane pass occupies residues 140 to 169 (RIQIYLSVLSLLLYIFTKISADIFSGAIFI). Residues 170–176 (NLALGLD) are Extracellular-facing. The helical transmembrane segment at 177-193 (IYLAIFILLAITALYTI) threads the bilayer. The Cytoplasmic portion of the chain corresponds to 194-202 (TGGLAAVIY). The helical transmembrane segment at 203-221 (TDTLQTAIMLVGSFILTGF) threads the bilayer. Over 222–275 (AFNEVGGYEAFMDKYMKAIPTKVSNGNFTAKEECYTPRADSFHIFRDPITGDMP) the chain is Extracellular. A glycan (N-linked (GlcNAc...) asparagine) is linked at asparagine 248. Disulfide bonds link cysteine 255/cysteine 511, cysteine 255/cysteine 611, cysteine 345/cysteine 351, cysteine 355/cysteine 361, and cysteine 517/cysteine 522. The chain crosses the membrane as a helical span at residues 276 to 295 (WPGLIFGLAILALWYWCTDQ). Over 296–309 (VIVQRCLSAKNMSH) the chain is Cytoplasmic. The helical transmembrane segment at 310–331 (VKADCTLCGYLKLLPMFLMVMP) threads the bilayer. At 332–375 (GMISRILYTEKIACVLPEECQKYCGTPVGCTNIAYPTLVVELMP) the chain is on the extracellular side. Residues 376 to 406 (NGLRGLMLSVMMASLMSSLTSIFNSASTLFT) traverse the membrane as a helical segment. Residues 407–422 (MDIYTKIRKKASEKEL) are Cytoplasmic-facing. A helical transmembrane segment spans residues 423-444 (MIAGRLFILVLIGISIAWVPIV). At 445–451 (QSAQSGQ) the chain is on the extracellular side. Residues 452 to 477 (LFDYIQSITSYLGPPIAAVFLLAIFC) traverse the membrane as a helical segment. D-glucose is bound at residue glutamine 457. Residues 478–481 (KRVN) lie on the Cytoplasmic side of the membrane. A helical transmembrane segment spans residues 482-504 (EQGAFWGLILGFLIGISRMITEF). Over 505–525 (AYGTGSCMEPSNCPKIICGVH) the chain is Extracellular. Residues 526 to 547 (YLYFAIILFVISVITILIISFL) form a helical membrane-spanning segment. Residues 548 to 645 (TKPIPDVHLY…TSEKPLWRTV (98 aa)) lie on the Cytoplasmic side of the membrane. Position 585 is a phosphoserine (serine 585). Position 588 is a phosphothreonine (threonine 588). The helical transmembrane segment at 646 to 663 (VNINGIILLAVAVFCHAY) threads the bilayer. At 664–665 (FA) the chain is on the extracellular side.

The protein belongs to the sodium:solute symporter (SSF) (TC 2.A.21) family. N-glycosylation is not necessary for the cotransporter function. Expressed in enterocytes and enteroendocrine cells of small intestine (at protein level). Expressed in S3 segments of renal proximal tubules (at protein level). Expressed in endometrial glandular and epithelial cells (at protein level).

The protein localises to the apical cell membrane. It carries out the reaction D-glucose(out) + 2 Na(+)(out) = D-glucose(in) + 2 Na(+)(in). It catalyses the reaction D-galactose(out) + 2 Na(+)(out) = D-galactose(in) + 2 Na(+)(in). Its activity is regulated as follows. Enhanced by the interaction with PDZK1IP1/MAP17; but unlike SLC5A2/SGLT2, PDZK1IP1 is not essential for SLC5A1 transporter activity. Possibly modulated by cholesterol binding. Electrogenic Na(+)-coupled sugar symporter that actively transports D-glucose or D-galactose at the plasma membrane, with a Na(+) to sugar coupling ratio of 2:1. Transporter activity is driven by a transmembrane Na(+) electrochemical gradient set by the Na(+)/K(+) pump. Has a primary role in the transport of dietary monosaccharides from enterocytes to blood. Responsible for the absorption of D-glucose or D-galactose across the apical brush-border membrane of enterocytes, whereas basolateral exit is provided by GLUT2. Additionally, functions as a D-glucose sensor in enteroendocrine cells, triggering the secretion of the incretins GCG and GIP that control food intake and energy homeostasis. Together with SGLT2, functions in reabsorption of D-glucose from glomerular filtrate, playing a nonredundant role in the S3 segment of the proximal tubules. Transports D-glucose into endometrial epithelial cells, controlling glycogen synthesis and nutritional support for the embryo as well as the decidual transformation of endometrium prior to conception. Acts as a water channel enabling passive water transport in response to the osmotic gradient created upon sugar and Na(+) uptake. Has high water conductivity comparable to aquaporins and therefore is expected to play an important role in transepithelial water permeability, especially in the small intestine. This Mus musculus (Mouse) protein is Sodium/glucose cotransporter 1 (Slc5a1).